The primary structure comprises 82 residues: Small ribosomal subunit protein bS16c (82 aa).

This sequence belongs to the bacterial ribosomal protein bS16 family.

It localises to the plastid. The protein localises to the chloroplast. The sequence is that of Small ribosomal subunit protein bS16c from Porphyra purpurea (Red seaweed).